Here is a 356-residue protein sequence, read N- to C-terminus: Serpentine receptor class epsilon-29 (356 aa).

The next 7 membrane-spanning stretches (helical) occupy residues 29–49, 61–81, 119–139, 161–181, 190–210, 251–271, and 281–301; these read IVEL…IYII, ILAI…LITI, LLIF…FGVL, LFIP…TSLA, FLAQ…YFFV, LVFV…ALFY, and FVEN…IFSV.

Belongs to the nematode receptor-like protein sre family.

The protein localises to the membrane. This Caenorhabditis elegans protein is Serpentine receptor class epsilon-29 (sre-29).